A 103-amino-acid chain; its full sequence is Small ribosomal subunit protein uS10 (103 aa).

This sequence belongs to the universal ribosomal protein uS10 family. Part of the 30S ribosomal subunit.

Functionally, involved in the binding of tRNA to the ribosomes. The chain is Small ribosomal subunit protein uS10 from Campylobacter hominis (strain ATCC BAA-381 / DSM 21671 / CCUG 45161 / LMG 19568 / NCTC 13146 / CH001A).